A 727-amino-acid chain; its full sequence is Probable copper-importing P-type ATPase A (727 aa).

The Cytoplasmic portion of the chain corresponds to 1-94; sequence MATNTKMETF…QTYLRKMKFD (94 aa). The HMA domain occupies 6–70; that stretch reads KMETFVITGM…SVENIGYGAI (65 aa). Cys-17 and Cys-20 together coordinate Cu(+). A helical membrane pass occupies residues 95–115; it reads LIFSAILTLPLMLAMIAMMLG. The Extracellular portion of the chain corresponds to 116-119; sequence SHGP. Residues 120–137 form a helical membrane-spanning segment; the sequence is IVSFFHLSLVQLLFALPV. The Cytoplasmic segment spans residues 138 to 161; the sequence is QFYVGWRFYKGAYHALKTKAPNMD. A helical membrane pass occupies residues 162 to 181; it reads VLVAIGTSAAFALSIYNGFF. Over 182 to 187 the chain is Extracellular; sequence PSHSHD. Residues 188–203 traverse the membrane as a helical segment; that stretch reads LYFESSSMIITLILLG. Over 204 to 341 the chain is Cytoplasmic; sequence KYLEHTAKSK…PIQQIADKIS (138 aa). The helical transmembrane segment at 342–362 threads the bilayer; the sequence is GIFVPIVLFLALVTLLVTGWL. Residues 363-375 are Extracellular-facing; sequence TKDWQLALLHSVS. A helical membrane pass occupies residues 376–396; that stretch reads VLVIACPCALGLATPTAIMVG. The Cytoplasmic segment spans residues 397–678; it reads TGVGAHNGIL…AATLKKIKQN (282 aa). Asp-425 (4-aspartylphosphate intermediate) is an active-site residue. Mg(2+) contacts are provided by Asp-621 and Asp-625. A helical membrane pass occupies residues 679-698; sequence LFWAFIYNTIGIPFAAFGFL. Residues 699-700 are Extracellular-facing; that stretch reads NP. The helical transmembrane segment at 701-721 threads the bilayer; sequence IIAGGAMAFSSISVLLNSLSL. Over 722–727 the chain is Cytoplasmic; that stretch reads NRKTIK.

Belongs to the cation transport ATPase (P-type) (TC 3.A.3) family. Type IB subfamily. As to quaternary structure, monomer. Interacts with the copper chaperone CopZ.

The protein localises to the cell membrane. It catalyses the reaction Cu(+)(in) + ATP + H2O = Cu(+)(out) + ADP + phosphate + H(+). Its activity is regulated as follows. Inhibited by vanadate. Its function is as follows. Probably involved in copper import under copper limiting conditions. The protein is Probable copper-importing P-type ATPase A (copA) of Enterococcus hirae (strain ATCC 9790 / DSM 20160 / JCM 8729 / LMG 6399 / NBRC 3181 / NCIMB 6459 / NCDO 1258 / NCTC 12367 / WDCM 00089 / R).